The chain runs to 73 residues: Small ribosomal subunit protein bS18 (73 aa).

Belongs to the bacterial ribosomal protein bS18 family. As to quaternary structure, part of the 30S ribosomal subunit. Forms a tight heterodimer with protein bS6.

Functionally, binds as a heterodimer with protein bS6 to the central domain of the 16S rRNA, where it helps stabilize the platform of the 30S subunit. The polypeptide is Small ribosomal subunit protein bS18 (Synechococcus sp. (strain WH7803)).